The chain runs to 125 residues: Protein ApaG (125 aa).

In terms of domain architecture, ApaG spans 1–125 (MNDTPRVCVQ…FRLAIATHIH (125 aa)).

This is Protein ApaG from Erwinia tasmaniensis (strain DSM 17950 / CFBP 7177 / CIP 109463 / NCPPB 4357 / Et1/99).